An 84-amino-acid chain; its full sequence is MLGIHVKKTKEELIISWQFSKIHIPLCEITEVIEDNTYAGVEEKSAIRIGTAYGTTDRILIKTVKQNYLLFTTNRVSILNKIKA.

This sequence belongs to the UPF0457 family.

This chain is UPF0457 protein BT9727_3043, found in Bacillus thuringiensis subsp. konkukian (strain 97-27).